We begin with the raw amino-acid sequence, 223 residues long: Probable transaldolase (223 aa).

The active-site Schiff-base intermediate with substrate is K91.

Belongs to the transaldolase family. Type 3B subfamily.

The protein localises to the cytoplasm. The catalysed reaction is D-sedoheptulose 7-phosphate + D-glyceraldehyde 3-phosphate = D-erythrose 4-phosphate + beta-D-fructose 6-phosphate. It functions in the pathway carbohydrate degradation; pentose phosphate pathway; D-glyceraldehyde 3-phosphate and beta-D-fructose 6-phosphate from D-ribose 5-phosphate and D-xylulose 5-phosphate (non-oxidative stage): step 2/3. In terms of biological role, transaldolase is important for the balance of metabolites in the pentose-phosphate pathway. This chain is Probable transaldolase, found in Chlorobium phaeobacteroides (strain BS1).